The chain runs to 386 residues: L-arabinitol 4-dehydrogenase (386 aa).

The Zn(2+) site is built by Cys55, His80, Glu81, Cys110, Cys113, Cys116, Cys124, and Glu165. Residues 192–193 (PI), Asp213, Arg218, Ile293, and 317–319 (QYR) contribute to the NAD(+) site.

It belongs to the zinc-containing alcohol dehydrogenase family. Homotetramer. Requires Zn(2+) as cofactor.

It catalyses the reaction L-arabinitol + NAD(+) = L-xylulose + NADH + H(+). The protein operates within carbohydrate degradation; L-arabinose degradation via L-arabinitol; D-xylulose 5-phosphate from L-arabinose (fungal route): step 2/5. Functionally, catalyzes the NAD-dependent oxidation of L-arabinitol to L-xylulose in the fungal L-arabinose catabolic pathway. L-arabinose catabolism is important for using plant material as a carbon source. Not active with NADP as cosubstrate. The chain is L-arabinitol 4-dehydrogenase (ladA) from Aspergillus niger (strain ATCC MYA-4892 / CBS 513.88 / FGSC A1513).